A 291-amino-acid chain; its full sequence is 33 kDa chaperonin (291 aa).

2 cysteine pairs are disulfide-bonded: Cys237/Cys239 and Cys270/Cys273.

It belongs to the HSP33 family. In terms of processing, under oxidizing conditions two disulfide bonds are formed involving the reactive cysteines. Under reducing conditions zinc is bound to the reactive cysteines and the protein is inactive.

It localises to the cytoplasm. In terms of biological role, redox regulated molecular chaperone. Protects both thermally unfolding and oxidatively damaged proteins from irreversible aggregation. Plays an important role in the bacterial defense system toward oxidative stress. The polypeptide is 33 kDa chaperonin (Bacillus cytotoxicus (strain DSM 22905 / CIP 110041 / 391-98 / NVH 391-98)).